The sequence spans 212 residues: Protein-L-isoaspartate O-methyltransferase (212 aa).

S60 is an active-site residue.

It belongs to the methyltransferase superfamily. L-isoaspartyl/D-aspartyl protein methyltransferase family.

The protein resides in the cytoplasm. It catalyses the reaction [protein]-L-isoaspartate + S-adenosyl-L-methionine = [protein]-L-isoaspartate alpha-methyl ester + S-adenosyl-L-homocysteine. Its function is as follows. Catalyzes the methyl esterification of L-isoaspartyl residues in peptides and proteins that result from spontaneous decomposition of normal L-aspartyl and L-asparaginyl residues. It plays a role in the repair and/or degradation of damaged proteins. This chain is Protein-L-isoaspartate O-methyltransferase, found in Pseudomonas entomophila (strain L48).